The following is a 306-amino-acid chain: Mitochondrial substrate carrier family protein ucpA (306 aa).

Residues 1 to 15 (MSVNLNNNKNNKNKV) are Mitochondrial intermembrane-facing. 3 Solcar repeats span residues 13 to 103 (NKVA…ISNA), 112 to 204 (YFFL…CKNL), and 211 to 301 (DGIY…FKKL). The chain crosses the membrane as a helical span at residues 16–36 (AIGFISGSLASICATTVTNPI). Residues 37–83 (ELVKTRLQLQGELQLSQRIYNGVWDAFKQIYKTEGIRGLQSGLIPAY) are Mitochondrial matrix-facing. A helical membrane pass occupies residues 84 to 103 (FSQATMQGIRLGSFDLISNA). Over 104-117 (LGAKPNQDYFFLKN) the chain is Mitochondrial intermembrane. Residues 118-138 (LLAGATAGAIGAAAGSPFDLV) traverse the membrane as a helical segment. Over 139–174 (KVRMQAANMYKNDPQFVGYSSSFAAFKQIIQKEGFK) the chain is Mitochondrial matrix. Residues 175–195 (GLTRGMLTSAQRTAVGSAIQL) traverse the membrane as a helical segment. Residues 196–211 (STYGSCKNLVLNFVDD) are Mitochondrial intermembrane-facing. The chain crosses the membrane as a helical span at residues 212–232 (GIYAYIISSMVAGFIVTFGMN). Residues 233–276 (PFDVARTRLYFQGKGNSHGEIYKGLMDCVYKTVKKEGFGAVYKG) are Mitochondrial matrix-facing. A helical transmembrane segment spans residues 277–295 (FWAHYLRLGPHTILTLVFW). The Mitochondrial intermembrane segment spans residues 296–306 (EQFKKLFSGEL).

The protein belongs to the mitochondrial carrier (TC 2.A.29) family.

The protein resides in the mitochondrion inner membrane. Mitochondrial solute carriers shuttle metabolites, nucleotides, and cofactors through the mitochondrial inner membrane. Transports oxaloacetate and sulfate. The chain is Mitochondrial substrate carrier family protein ucpA (ucpA) from Dictyostelium discoideum (Social amoeba).